We begin with the raw amino-acid sequence, 101 residues long: Small ribosomal subunit protein uS10 (101 aa).

This sequence belongs to the universal ribosomal protein uS10 family. As to quaternary structure, part of the 30S ribosomal subunit.

Involved in the binding of tRNA to the ribosomes. The sequence is that of Small ribosomal subunit protein uS10 from Mycobacterium bovis (strain ATCC BAA-935 / AF2122/97).